Consider the following 210-residue polypeptide: Redox-sensing transcriptional repressor Rex (210 aa).

A DNA-binding region (H-T-H motif) is located at residues 17 to 56 (SYLHLVKKAEADKLEYISGTVIAEELELEPIQVRKDLTIT). 91-96 (GAGSLG) contacts NAD(+).

Belongs to the transcriptional regulatory Rex family. As to quaternary structure, homodimer.

The protein resides in the cytoplasm. In terms of biological role, modulates transcription in response to changes in cellular NADH/NAD(+) redox state. This Treponema denticola (strain ATCC 35405 / DSM 14222 / CIP 103919 / JCM 8153 / KCTC 15104) protein is Redox-sensing transcriptional repressor Rex.